The sequence spans 200 residues: Holliday junction resolvase RecU (200 aa).

The tract at residues 1-27 (MALKYPSGKEYRGNKPNAARRPAADYA) is disordered. 4 residues coordinate Mg(2+): T84, D86, E99, and Q118.

This sequence belongs to the RecU family. In terms of assembly, homodimer. The cofactor is Mg(2+).

The protein localises to the cytoplasm. It catalyses the reaction Endonucleolytic cleavage at a junction such as a reciprocal single-stranded crossover between two homologous DNA duplexes (Holliday junction).. Endonuclease that resolves Holliday junction intermediates in genetic recombination. Cleaves mobile four-strand junctions by introducing symmetrical nicks in paired strands. Promotes annealing of linear ssDNA with homologous dsDNA. Required for DNA repair, homologous recombination and chromosome segregation. The chain is Holliday junction resolvase RecU from Geobacillus kaustophilus (strain HTA426).